Consider the following 405-residue polypeptide: Arginine biosynthesis bifunctional protein ArgJ (405 aa).

6 residues coordinate substrate: Thr152, Lys178, Thr189, Glu276, Asn400, and Ser405. The active-site Nucleophile is Thr189.

Belongs to the ArgJ family. In terms of assembly, heterotetramer of two alpha and two beta chains.

It localises to the cytoplasm. It catalyses the reaction N(2)-acetyl-L-ornithine + L-glutamate = N-acetyl-L-glutamate + L-ornithine. The enzyme catalyses L-glutamate + acetyl-CoA = N-acetyl-L-glutamate + CoA + H(+). It participates in amino-acid biosynthesis; L-arginine biosynthesis; L-ornithine and N-acetyl-L-glutamate from L-glutamate and N(2)-acetyl-L-ornithine (cyclic): step 1/1. Its pathway is amino-acid biosynthesis; L-arginine biosynthesis; N(2)-acetyl-L-ornithine from L-glutamate: step 1/4. Its function is as follows. Catalyzes two activities which are involved in the cyclic version of arginine biosynthesis: the synthesis of N-acetylglutamate from glutamate and acetyl-CoA as the acetyl donor, and of ornithine by transacetylation between N(2)-acetylornithine and glutamate. The chain is Arginine biosynthesis bifunctional protein ArgJ from Chromobacterium violaceum (strain ATCC 12472 / DSM 30191 / JCM 1249 / CCUG 213 / NBRC 12614 / NCIMB 9131 / NCTC 9757 / MK).